The following is a 161-amino-acid chain: General odorant-binding protein 2 (161 aa).

Residues 1-20 (MVNRLILMVVVVFITDSVMG) form the signal peptide. Disulfide bonds link Cys39–Cys74, Cys70–Cys128, and Cys117–Cys137.

The protein belongs to the PBP/GOBP family. In terms of assembly, homodimer. In terms of tissue distribution, olfactory tissue; expressed by the glia-like support cells that ensheathe the sensory neurons and line the base of the sensillum lumen.

Its function is as follows. Present in the aqueous fluid surrounding olfactory sensory dendrites and are thought to aid in the capture and transport of hydrophobic odorants into and through this fluid. The polypeptide is General odorant-binding protein 2 (GOBP2) (Manduca sexta (Tobacco hawkmoth)).